The primary structure comprises 482 residues: Pancreatic lipase-related protein 2 (482 aa).

A signal peptide spans 1-30 (MPMDVRGCLFPSVQMLLCWLVSLLLATVGG). Cysteines 34 and 40 form a disulfide. An N-linked (GlcNAc...) asparagine glycan is attached at Asn92. Residues 106–118 (IHGFIDKGEEGWL) form a required for galactolipase activity region. Cys122 and Cys133 are disulfide-bonded. The active-site Nucleophile is the Ser184. The Charge relay system role is filled by Asp208. 4 residues coordinate Ca(2+): Glu219, Arg222, Asp224, and Asp227. Cys269 and Cys293 are oxidised to a cystine. The interval 270-292 (QKNILSTIVDINGIWEGTRNFAA) is required for galactolipase activity. The Charge relay system role is filled by His295. Cystine bridges form between Cys317–Cys328 and Cys331–Cys336. N-linked (GlcNAc...) asparagine glycans are attached at residues Asn366 and Asn441. The 113-residue stretch at 370–482 (WRYKVSVTLS…EDVLQSLYPC (113 aa)) folds into the PLAT domain. Cys466 and Cys482 are disulfide-bonded.

This sequence belongs to the AB hydrolase superfamily. Lipase family. Expressed in acinar cells of pancreas (at protein level).

The protein localises to the secreted. It localises to the zymogen granule membrane. Its subcellular location is the cell projection. The protein resides in the neuron projection. The catalysed reaction is a triacylglycerol + H2O = a diacylglycerol + a fatty acid + H(+). It catalyses the reaction a 1,2-diacyl-3-O-(beta-D-galactosyl)-sn-glycerol + 2 H2O = 3-beta-D-galactosyl-sn-glycerol + 2 a fatty acid + 2 H(+). It carries out the reaction 1,2,3-tri-(9Z-octadecenoyl)-glycerol + H2O = di-(9Z)-octadecenoylglycerol + (9Z)-octadecenoate + H(+). The enzyme catalyses di-(9Z)-octadecenoylglycerol + H2O = (9Z-octadecenoyl)-glycerol + (9Z)-octadecenoate + H(+). The catalysed reaction is (9Z-octadecenoyl)-glycerol + H2O = glycerol + (9Z)-octadecenoate + H(+). It catalyses the reaction 1-(9Z-octadecenoyl)-glycerol + H2O = glycerol + (9Z)-octadecenoate + H(+). It carries out the reaction 1,2,3-tripropanoylglycerol + H2O = dipropanoylglycerol + propanoate + H(+). The enzyme catalyses 1,2,3-tributanoylglycerol + H2O = dibutanoylglycerol + butanoate + H(+). The catalysed reaction is 1,2,3-trioctanoylglycerol + H2O = dioctanoylglycerol + octanoate + H(+). It catalyses the reaction 1,2-didecanoylglycerol + H2O = decanoylglycerol + decanoate + H(+). It carries out the reaction long chain 1,2-diacyl-3-O-beta-D-galactosyl-sn-glycerol + H2O = long chain acyl-3-O-beta-D-galactosyl-sn-glycerol + a fatty acid + H(+). The enzyme catalyses 1,2-dioctanoyl-3-O-beta-D-galactosyl-sn-glycerol + H2O = octanoyl-3-(beta-D-galactosyl)-sn-glycerol + octanoate + H(+). The catalysed reaction is 1,2-didodecanoyl-3-beta-D-galactosyl-sn-glycerol + H2O = dodecanoyl-3-beta-D-galactosyl-sn-glycerol + dodecanoate + H(+). It catalyses the reaction 1-beta-D-galactosyl-2,3-didodecanoyl-sn-glycerol + H2O = 1-beta-D-galactosyl-dodecanoyl-sn-glycerol + dodecanoate + H(+). It carries out the reaction a 1,2-diacyl-3-O-[alpha-D-galactosyl-(1-&gt;6)-beta-D-galactosyl]-sn-glycerol + H2O = acyl-3-O-[alpha-D-galactosyl-(1-&gt;6)-beta-D-galactosyl]-sn-glycerol + a fatty acid + H(+). The enzyme catalyses long chain 1,2-diacyl-3-O-[alpha-D-galactosyl-(1-&gt;6)-beta-D-galactosyl]-sn-glycerol + H2O = long chain acyl-3-O-[alpha-D-galactosyl-(1-&gt;6)-beta-D-galactosyl]-sn-glycerol + a fatty acid + H(+). The catalysed reaction is 1,2-dioctanoyl-3-O-[alpha-D-galactosyl-(1-&gt;6)-beta-D-galactosyl]-sn-glycerol + H2O = octanoyl-3-O-[alpha-D-galactosyl-(1-&gt;6)-beta-D-galactosyl]-sn-glycerol + octanoate + H(+). It catalyses the reaction 1,2-didodecanoyl-3-O-[alpha-D-galactosyl-(1-&gt;6)-beta-D-galactosyl]-sn-glycerol + H2O = dodecanoyl-3-O-[alpha-D-galactosyl-(1-&gt;6)-beta-D-galactosyl]-sn-glycerol + dodecanoate + H(+). It carries out the reaction a 1,2-diacyl-sn-glycero-3-phosphocholine + H2O = a monoacyl-sn-glycero-3-phosphocholine + a fatty acid + H(+). It functions in the pathway glycerolipid metabolism; triacylglycerol degradation. Its pathway is glycolipid metabolism. Its activity is regulated as follows. CLPS stimulates triacylglycerol lipase activity. Triacylglycerol lipase activity is not inhibited by increasing bile salt concentration. In terms of biological role, lipase that primarily hydrolyzes triglycerides and galactosylglycerides. In neonates, may play a major role in pancreatic digestion of dietary fats such as milk fat globules enriched in long-chain triglycerides. Hydrolyzes short-, medium- and long-chain fatty acyls in triglycerides without apparent positional specificity. Can completely deacylate triacylglycerols. When the liver matures and bile salt synthesis increases, likely functions mainly as a galactolipase and monoacylglycerol lipase. Hydrolyzes monogalactosyldiglycerols (MGDG) and digalactosyldiacylglycerols (DGDG) present in a plant-based diet, releasing long-chain polyunsaturated fatty acids. Hydrolyzes medium- and long-chain fatty acyls in galactolipids. May act together with LIPF to hydrolyze partially digested triglycerides. Hydrolyzes long-chain monoglycerides with high efficiency. In cytotoxic T cells, contributes to perforin-dependent cell lysis, but is unlikely to mediate direct cytotoxicity. Also has low phospholipase activity. In neurons, required for the localization of the phospholipid 1-oleoyl-2-palmitoyl-PC (OPPC) to neurite tips through acyl chain remodeling of membrane phospholipids. The resulting OPPC-rich lipid membrane domain recruits the t-SNARE protein STX4 by selectively interacting with the STX4 transmembrane domain and this promotes surface expression of the dopamine transporter SLC6A3/DAT at neurite tips by facilitating fusion of SLC6A3-containing transport vesicles with the plasma membrane. The chain is Pancreatic lipase-related protein 2 from Mus musculus (Mouse).